Here is a 351-residue protein sequence, read N- to C-terminus: Phospho-N-acetylmuramoyl-pentapeptide-transferase (351 aa).

10 consecutive transmembrane segments (helical) span residues 22–42 (ILAF…FISW), 65–85 (TPTM…LITT), 87–107 (FNKY…LGFI), 128–148 (FLLQ…VGFD), 158–178 (YPIF…IVAM), 190–210 (GLAT…LYIV), 225–245 (LGVG…LGFL), 254–274 (VFMG…LAIV), 279–299 (LLLI…ILQV), and 328–348 (KITI…ILSI).

It belongs to the glycosyltransferase 4 family. MraY subfamily. Mg(2+) serves as cofactor.

It is found in the cell inner membrane. The catalysed reaction is UDP-N-acetyl-alpha-D-muramoyl-L-alanyl-gamma-D-glutamyl-meso-2,6-diaminopimeloyl-D-alanyl-D-alanine + di-trans,octa-cis-undecaprenyl phosphate = di-trans,octa-cis-undecaprenyl diphospho-N-acetyl-alpha-D-muramoyl-L-alanyl-D-glutamyl-meso-2,6-diaminopimeloyl-D-alanyl-D-alanine + UMP. The protein operates within cell wall biogenesis; peptidoglycan biosynthesis. Catalyzes the initial step of the lipid cycle reactions in the biosynthesis of the cell wall peptidoglycan: transfers peptidoglycan precursor phospho-MurNAc-pentapeptide from UDP-MurNAc-pentapeptide onto the lipid carrier undecaprenyl phosphate, yielding undecaprenyl-pyrophosphoryl-MurNAc-pentapeptide, known as lipid I. The sequence is that of Phospho-N-acetylmuramoyl-pentapeptide-transferase from Nautilia profundicola (strain ATCC BAA-1463 / DSM 18972 / AmH).